We begin with the raw amino-acid sequence, 384 residues long: Mitogen-activated protein kinase 8 (384 aa).

Residues 26 to 321 (YQNLRPIGSG…VDEALQHPYI (296 aa)) form the Protein kinase domain. ATP-binding positions include 33–38 (GSGAQG) and K55. The Proton acceptor role is filled by D151. Position 183 is a phosphothreonine (T183). Positions 183 to 185 (TPY) match the TXY motif. Y185 is modified (phosphotyrosine).

Belongs to the protein kinase superfamily. CMGC Ser/Thr protein kinase family. MAP kinase subfamily. Mg(2+) is required as a cofactor. Dually phosphorylated on Thr-183 and Tyr-185, which activates the enzyme.

The protein localises to the cytoplasm. It localises to the nucleus. Its subcellular location is the synapse. The enzyme catalyses L-seryl-[protein] + ATP = O-phospho-L-seryl-[protein] + ADP + H(+). It catalyses the reaction L-threonyl-[protein] + ATP = O-phospho-L-threonyl-[protein] + ADP + H(+). Activated by threonine and tyrosine phosphorylation. In terms of biological role, responds to activation by environmental stress and pro-inflammatory cytokines by phosphorylating a number of transcription factors, primarily components of AP-1 such as c-Jun and ATF2 and thus regulates AP-1 transcriptional activity. May play a role in the regulation of the circadian clock. This chain is Mitogen-activated protein kinase 8 (mapk8), found in Danio rerio (Zebrafish).